We begin with the raw amino-acid sequence, 395 residues long: S-adenosylmethionine synthase (395 aa).

E10 provides a ligand contact to Mg(2+). Residue H16 participates in ATP binding. E44 contacts K(+). The L-methionine site is built by E57 and Q100. ATP-binding positions include 168–170 (DGK), 236–239 (SGRF), 253–254 (RK), A270, K274, and K278. Position 278 (K278) interacts with L-methionine.

It belongs to the AdoMet synthase family. As to quaternary structure, homotetramer. It depends on Mn(2+) as a cofactor. The cofactor is Mg(2+). Co(2+) serves as cofactor. Requires K(+) as cofactor.

The protein resides in the cytoplasm. It catalyses the reaction L-methionine + ATP + H2O = S-adenosyl-L-methionine + phosphate + diphosphate. The protein operates within amino-acid biosynthesis; S-adenosyl-L-methionine biosynthesis; S-adenosyl-L-methionine from L-methionine: step 1/1. Functionally, catalyzes the formation of S-adenosylmethionine from methionine and ATP. The reaction comprises two steps that are both catalyzed by the same enzyme: formation of S-adenosylmethionine (AdoMet) and triphosphate, and subsequent hydrolysis of the triphosphate. The protein is S-adenosylmethionine synthase (METK) of Populus deltoides (Eastern poplar).